A 461-amino-acid polypeptide reads, in one-letter code: Inositol-trisphosphate 3-kinase A (461 aa).

The interval 1–29 (MTLPGGPTGMARPGGARPCSPGLERAPRR) is disordered. The interval 1 to 133 (MTLPGGPTGM…SVSSTGSSSL (133 aa)) is required for cytoskeleton location. 3 positions are modified to omega-N-methylarginine: arginine 35, arginine 55, and arginine 62. The interval 49-160 (AAAGEPRARG…GNVQLEAGED (112 aa)) is disordered. Residues 118–134 (RRLSTSSVSSTGSSSLL) show a composition bias toward low complexity. Phosphoserine occurs at positions 137 and 197. Residues serine 197, lysine 209, 249-251 (QDL), and aspartate 262 contribute to the ATP site. Substrate is bound by residues lysine 264 and arginine 285. A calmodulin-binding region spans residues 287 to 295 (DMYKKMLAV). Position 312–319 (312–319 (KPRYMQWR)) interacts with substrate. Residues lysine 336 and aspartate 416 each coordinate ATP. A substrate-binding site is contributed by lysine 419.

Belongs to the inositol phosphokinase (IPK) family. As to expression, expressed in brain.

Its subcellular location is the cytoplasm. It is found in the cytoskeleton. It catalyses the reaction 1D-myo-inositol 1,4,5-trisphosphate + ATP = 1D-myo-inositol 1,3,4,5-tetrakisphosphate + ADP + H(+). With respect to regulation, activated by calcium/calmodulin. Its function is as follows. Catalyzes the phosphorylation of 1D-myo-inositol 1,4,5-trisphosphate (InsP3) into 1D-myo-inositol 1,3,4,5-tetrakisphosphate and participates to the regulation of calcium homeostasis. The chain is Inositol-trisphosphate 3-kinase A from Homo sapiens (Human).